The chain runs to 340 residues: MTMTAAVVREFGKPLVIEEVPVPQPGPGQVLIKYEATGVCHTDLHAAKGDWPVRPNPPFIPGHEGVGYVAKLGAEVTRLKEGDRVGVPWLHTACGCCTPCRTGWETLCGSQQNTGYSVDGTFAQYGLADPDFVGRLPARLEFGPAAPVLCAGVTVYKGLKETEVRPGEWVLVSGIGGLGHMAVQYAKAMGMHVAAADIFPDKLALAEKLGADLVVDARAPDAVEEVQRRTGGLHGALVTAVSPKAMEQAYSMLRSKGTMALVGLPPGQICLPVFDTVLKRITVRGSIVGTRQDLEEALEFAGEGKVAAHFSWDKIENINAIFERMEEGKIDGRIVLDLNG.

Zn(2+) contacts are provided by C40 and H63.

It belongs to the zinc-containing alcohol dehydrogenase family. Requires Zn(2+) as cofactor.

It catalyses the reaction a primary alcohol + NAD(+) = an aldehyde + NADH + H(+). It carries out the reaction a secondary alcohol + NAD(+) = a ketone + NADH + H(+). This is Alcohol dehydrogenase (adhA) from Rhizobium meliloti (strain 1021) (Ensifer meliloti).